The primary structure comprises 830 residues: Leucine--tRNA ligase (830 aa).

The 'HIGH' region motif lies at 42-52 (PYPSGNLHMGH). The 'KMSKS' region signature appears at 585 to 589 (KMSKS). Lysine 588 is an ATP binding site.

The protein belongs to the class-I aminoacyl-tRNA synthetase family.

The protein localises to the cytoplasm. It catalyses the reaction tRNA(Leu) + L-leucine + ATP = L-leucyl-tRNA(Leu) + AMP + diphosphate. In Halothermothrix orenii (strain H 168 / OCM 544 / DSM 9562), this protein is Leucine--tRNA ligase.